The sequence spans 416 residues: UBX domain-containing protein 4 (416 aa).

The UBX domain occupies 273–350 (KAISECLLRV…EFGSKTMLLF (78 aa)). Residues 376-402 (TRTTPSVNTINKSNPQGPSDNATSIKK) are disordered. Positions 378–402 (TTPSVNTINKSNPQGPSDNATSIKK) are enriched in polar residues.

The protein resides in the nucleus. Its subcellular location is the cytoplasm. Functionally, involved in CDC48-dependent protein degradation through the ubiquitin/proteasome pathway. This Saccharomyces cerevisiae (strain ATCC 204508 / S288c) (Baker's yeast) protein is UBX domain-containing protein 4 (UBX4).